A 352-amino-acid polypeptide reads, in one-letter code: Septin-2B (352 aa).

One can recognise a Septin-type G domain in the interval 33-305 (KGFEFTLMVV…ENFRSERLKK (273 aa)). The interval 43 to 50 (GESGLGKS) is G1 motif. GTP contacts are provided by residues 43–50 (GESGLGKS), T77, G103, 182–190 (KADTLTLRE), G240, and R255. The G3 motif stretch occupies residues 100-103 (DTPG). A G4 motif region spans residues 181 to 184 (AKAD). Residues 259 to 269 (WGVVEVENPEH) form an important for dimerization region.

Belongs to the TRAFAC class TrmE-Era-EngA-EngB-Septin-like GTPase superfamily. Septin GTPase family. In terms of assembly, septins polymerize into heterooligomeric protein complexes that form filaments, and associate with cellular membranes, actin filaments and microtubules. GTPase activity is required for filament formation. Can form heterooligomers with other family members and form filaments. Interacts with wdpcp.

It is found in the cytoplasm. It localises to the cytoskeleton. The protein resides in the spindle. Its subcellular location is the cleavage furrow. The protein localises to the midbody. It is found in the cell projection. It localises to the cilium membrane. Its function is as follows. Filament-forming cytoskeletal GTPase. Required for normal organization of the actin cytoskeleton. Plays a role in the biogenesis of polarized columnar-shaped epithelium. Required for the progression through mitosis through regulation of chromosome congression. During anaphase, may be required for chromosome segregation and spindle elongation. Probably plays a role in ciliogenesis and collective cell movements including convergent extension during gastrulation. In cilia, required for the integrity of the diffusion barrier at the base of the primary cilium that prevents diffusion of transmembrane proteins between the cilia and plasma membranes. Controls cell shape and not polarization of cells during convergent extension. The polypeptide is Septin-2B (sept2-b) (Xenopus laevis (African clawed frog)).